We begin with the raw amino-acid sequence, 236 residues long: Cyclin-P3-1 (236 aa).

Belongs to the cyclin family. Cyclin U/P subfamily.

The chain is Cyclin-P3-1 (CYCP3-1) from Oryza sativa subsp. japonica (Rice).